We begin with the raw amino-acid sequence, 337 residues long: Holliday junction branch migration complex subunit RuvB (337 aa).

Residues 4 to 186 form a large ATPase domain (RuvB-L) region; sequence ADRLIAADNP…FGIVQRLEYY (183 aa). ATP contacts are provided by residues isoleucine 25, arginine 26, glycine 67, lysine 70, threonine 71, threonine 72, 133-135, arginine 176, tyrosine 186, and arginine 223; that span reads EDY. Mg(2+) is bound at residue threonine 71. A small ATPAse domain (RuvB-S) region spans residues 187–257; that stretch reads KVDDLQYIVQ…IADKALNMLD (71 aa). Positions 260–337 are head domain (RuvB-H); that stretch reads VCGFDYMDRK…LHFGIDRPDK (78 aa). DNA-binding residues include arginine 315 and arginine 320.

It belongs to the RuvB family. In terms of assembly, homohexamer. Forms an RuvA(8)-RuvB(12)-Holliday junction (HJ) complex. HJ DNA is sandwiched between 2 RuvA tetramers; dsDNA enters through RuvA and exits via RuvB. An RuvB hexamer assembles on each DNA strand where it exits the tetramer. Each RuvB hexamer is contacted by two RuvA subunits (via domain III) on 2 adjacent RuvB subunits; this complex drives branch migration. In the full resolvosome a probable DNA-RuvA(4)-RuvB(12)-RuvC(2) complex forms which resolves the HJ.

The protein localises to the cytoplasm. The catalysed reaction is ATP + H2O = ADP + phosphate + H(+). Functionally, the RuvA-RuvB-RuvC complex processes Holliday junction (HJ) DNA during genetic recombination and DNA repair, while the RuvA-RuvB complex plays an important role in the rescue of blocked DNA replication forks via replication fork reversal (RFR). RuvA specifically binds to HJ cruciform DNA, conferring on it an open structure. The RuvB hexamer acts as an ATP-dependent pump, pulling dsDNA into and through the RuvAB complex. RuvB forms 2 homohexamers on either side of HJ DNA bound by 1 or 2 RuvA tetramers; 4 subunits per hexamer contact DNA at a time. Coordinated motions by a converter formed by DNA-disengaged RuvB subunits stimulates ATP hydrolysis and nucleotide exchange. Immobilization of the converter enables RuvB to convert the ATP-contained energy into a lever motion, pulling 2 nucleotides of DNA out of the RuvA tetramer per ATP hydrolyzed, thus driving DNA branch migration. The RuvB motors rotate together with the DNA substrate, which together with the progressing nucleotide cycle form the mechanistic basis for DNA recombination by continuous HJ branch migration. Branch migration allows RuvC to scan DNA until it finds its consensus sequence, where it cleaves and resolves cruciform DNA. This Aliivibrio salmonicida (strain LFI1238) (Vibrio salmonicida (strain LFI1238)) protein is Holliday junction branch migration complex subunit RuvB.